Here is a 208-residue protein sequence, read N- to C-terminus: V-type ATP synthase subunit E (208 aa).

It belongs to the V-ATPase E subunit family.

Produces ATP from ADP in the presence of a proton gradient across the membrane. This is V-type ATP synthase subunit E (atpE) from Chlamydia muridarum (strain MoPn / Nigg).